The following is a 55-amino-acid chain: Protein CADMIUM TOLERANCE 2 (55 aa).

The helical transmembrane segment at G24–Y40 threads the bilayer.

This sequence belongs to the CYSTM1 family. In terms of tissue distribution, expressed only in roots.

The protein localises to the cell membrane. Its subcellular location is the secreted. It localises to the cell wall. In terms of biological role, confers resistance to heavy metal ions (e.g. cadmium (CdCl(2)) and copper (CuCl(2))) by chelating them at the plasma membrane of root cells, thus stopping their entry and reducing their accumulation. This is Protein CADMIUM TOLERANCE 2 from Oryza sativa subsp. japonica (Rice).